Consider the following 353-residue polypeptide: Melatonin receptor type 1A (353 aa).

A disordered region spans residues 1 to 26 (MRANGSELNGTVLPRDPPAEGSPRRP). The Extracellular segment spans residues 1 to 32 (MRANGSELNGTVLPRDPPAEGSPRRPPWVTST). N-linked (GlcNAc...) asparagine glycans are attached at residues N4 and N9. The chain crosses the membrane as a helical span at residues 33-53 (LATILIFTIVVDLLGNLLVIL). The Cytoplasmic segment spans residues 54–66 (SVYRNKKLRNAGN). A helical membrane pass occupies residues 67–87 (IFVVSLAIADLVVAIYPYPLV). Topologically, residues 88 to 105 (LTSVFHNGWNLGYLHCQI) are extracellular. The cysteines at positions 103 and 180 are disulfide-linked. Residues 106–126 (SGFLMGLSVIGSIFNITGIAI) traverse the membrane as a helical segment. The Cytoplasmic segment spans residues 127–145 (NRYCYICHSLKYDKLYSDK). The chain crosses the membrane as a helical span at residues 146-166 (NSLCYVGLIWVLTVVAIVPNL). Residues 167-190 (FVGSLQYDPRIYSCTFAQSVSSAY) lie on the Extracellular side of the membrane. Residues 191–211 (TIAVVFFHFILPIAIVTYCYL) traverse the membrane as a helical segment. Topologically, residues 212-243 (RIWILVIQVRRRVKPDNNPRLKPHDFRNFVTM) are cytoplasmic. The chain crosses the membrane as a helical span at residues 244–264 (FVVFVLFAVCWAPLNFIGLAV). Topologically, residues 265-277 (AVDPETIIPRIPE) are extracellular. A helical transmembrane segment spans residues 278–298 (WLFVSSYYMAYFNSCLNAIIY). The Cytoplasmic portion of the chain corresponds to 299 to 353 (GLLNQNFRREYKKIVVSFCTAKAFFQDSSNDAADRIRSKPSPLITNNNQVKVDSV).

It belongs to the G-protein coupled receptor 1 family. As to expression, expressed in optic tectum and retina, less in neostriatum, hypothalamus and thalamus.

The protein localises to the cell membrane. High affinity receptor for melatonin. The activity of this receptor is mediated by pertussis toxin sensitive G proteins that inhibits adenylate cyclase activity. In Gallus gallus (Chicken), this protein is Melatonin receptor type 1A.